The following is a 347-amino-acid chain: GMP reductase (347 aa).

108-131 (NDFLKLQRILALSPALRFICVDVA) is a binding site for NADP(+). K(+) is bound by residues glycine 181 and glycine 183. Cysteine 186 acts as the Thioimidate intermediate in catalysis. 216–239 (IVGDGGCTCPGDVAKAFGGGADFV) serves as a coordination point for NADP(+).

It belongs to the IMPDH/GMPR family. GuaC type 1 subfamily. As to quaternary structure, homotetramer.

It catalyses the reaction IMP + NH4(+) + NADP(+) = GMP + NADPH + 2 H(+). Its function is as follows. Catalyzes the irreversible NADPH-dependent deamination of GMP to IMP. It functions in the conversion of nucleobase, nucleoside and nucleotide derivatives of G to A nucleotides, and in maintaining the intracellular balance of A and G nucleotides. The protein is GMP reductase of Tolumonas auensis (strain DSM 9187 / NBRC 110442 / TA 4).